The sequence spans 306 residues: ClpXP adapter protein SpxH (306 aa).

Belongs to the SpxH family. In terms of assembly, interacts with Spx.

Its subcellular location is the cytoplasm. Adapter protein required for efficient degradation of Spx by ClpXP under non-stress conditions. Interaction with Spx stabilizes Spx and exposes the C-terminus of Spx for recognition and proteolysis by ClpXP. The polypeptide is ClpXP adapter protein SpxH (Halalkalibacterium halodurans (strain ATCC BAA-125 / DSM 18197 / FERM 7344 / JCM 9153 / C-125) (Bacillus halodurans)).